The primary structure comprises 155 residues: Arginine repressor (155 aa).

This sequence belongs to the ArgR family.

The protein resides in the cytoplasm. The protein operates within amino-acid biosynthesis; L-arginine biosynthesis [regulation]. Its function is as follows. Regulates arginine biosynthesis genes. This chain is Arginine repressor, found in Mannheimia succiniciproducens (strain KCTC 0769BP / MBEL55E).